A 440-amino-acid chain; its full sequence is Xylose isomerase (440 aa).

Active-site residues include His-101 and Asp-104. 7 residues coordinate Mg(2+): Glu-232, Glu-268, His-271, Asp-296, Asp-307, Asp-309, and Asp-339.

This sequence belongs to the xylose isomerase family. In terms of assembly, homotetramer. Mg(2+) is required as a cofactor.

The protein resides in the cytoplasm. It catalyses the reaction alpha-D-xylose = alpha-D-xylulofuranose. This chain is Xylose isomerase, found in Escherichia fergusonii (strain ATCC 35469 / DSM 13698 / CCUG 18766 / IAM 14443 / JCM 21226 / LMG 7866 / NBRC 102419 / NCTC 12128 / CDC 0568-73).